We begin with the raw amino-acid sequence, 256 residues long: E3 ubiquitin-protein ligase MIR2 (256 aa).

The Cytoplasmic segment spans residues 1–83 (MASKDVEEGV…NLWPEMERQE (83 aa)). Residues 7–66 (EEGVEGPICWICREEVGNEGIHPCACTGELDVVHPQCLSTWLTVSRNTACQMCRVIYRTR) form an RING-CH-type zinc finger. The Zn(2+) site is built by Cys-15, Cys-18, Cys-30, Cys-32, His-40, Cys-43, Cys-56, and Cys-59. A helical membrane pass occupies residues 84–104 (IFELFLLMSVVVAGLVGVALC). The Extracellular segment spans residues 105 to 124 (TWTLLVILTAPAGTFSPGAV). A helical membrane pass occupies residues 125 to 145 (LGFLCFFGFYQIFIVFAFGGI). Topologically, residues 146–256 (CRVSGTVRAL…VRKNHPKNNG (111 aa)) are cytoplasmic. The disordered stretch occupies residues 179–256 (DNIELTVLVG…VRKNHPKNNG (78 aa)). The span at 193–203 (TDEEPTDESSE) shows a compositional bias: acidic residues. Positions 245-256 (KPVRKNHPKNNG) are enriched in basic residues.

Binds human MHC-I, CD86, ICAM1 and CD1D.

The protein localises to the host cell membrane. Its subcellular location is the host endoplasmic reticulum. It catalyses the reaction S-ubiquitinyl-[E2 ubiquitin-conjugating enzyme]-L-cysteine + [acceptor protein]-L-lysine = [E2 ubiquitin-conjugating enzyme]-L-cysteine + N(6)-ubiquitinyl-[acceptor protein]-L-lysine.. Its pathway is protein modification; protein ubiquitination. Its function is as follows. Membrane-bound E3 ubiquitin ligase expressed at the immediate early stage of viral reactivation to mediate polyubiquitination of various host membrane proteins related to the immune response. Promotes ubiquitination and subsequent degradation of host MHC-I, CD86, DC-SIGN and DC-SIGNR, ICAM1 and CD1D molecules, presumably to prevent lysis of infected cells by cytotoxic T-lymphocytes and NK cell. Plays a role in the down-regulation of the host stress-induced NKG2D ligands MICA, MICB and CLEC2B, which enable immune cells expressing the NKG2D receptor to recognize and annihilate infected cells prior to viral spread. Alters monocyte metabolism and proliferation by mediating rapid internalization of cellular growth factor-binding receptor tyrosine kinases from the surface leading to increased signaling. The chain is E3 ubiquitin-protein ligase MIR2 (K5) from Homo sapiens (Human).